We begin with the raw amino-acid sequence, 199 residues long: MRYYAEPVGRLIEELSKLPGVGPKTAQRLAFHLLHVPRNEAVALAKAIVEAHDKTLYCSVCTNLTDRDPCRICSDANRDRAVICVVEEPRDVVAVEKTREYRGHYHVLHGALSPIEGVGPEQLRISQLMARLADPELKEVIVATNPTVEGEATAAYLARLIKPMGVKVTRIAHGLPVGGDLEYADQVTLLRAMEGRREL.

Residues Cys-58–Cys-73 form a C4-type zinc finger. Positions Ala-81–Pro-176 constitute a Toprim domain.

Belongs to the RecR family.

Functionally, may play a role in DNA repair. It seems to be involved in an RecBC-independent recombinational process of DNA repair. It may act with RecF and RecO. This chain is Recombination protein RecR, found in Heliobacterium modesticaldum (strain ATCC 51547 / Ice1).